Here is a 350-residue protein sequence, read N- to C-terminus: Pleckstrin (350 aa).

One can recognise a PH 1 domain in the interval 4-101 (KRIREGYLVK…WVRDIKKAIK (98 aa)). An N6-acetyllysine modification is found at lysine 64. Phosphoserine; by PKC is present on residues serine 113 and serine 117. A DEP domain is found at 136–221 (TEKGIKELNL…NPDAFYYFPD (86 aa)). In terms of domain architecture, PH 2 spans 244 to 347 (VIIKQGCLLK…WIRAIQMASR (104 aa)).

In terms of biological role, major protein kinase C substrate of platelets. This chain is Pleckstrin (PLEK), found in Homo sapiens (Human).